The sequence spans 491 residues: Glutamyl-tRNA(Gln) amidotransferase subunit A (491 aa).

Catalysis depends on charge relay system residues Lys-76 and Ser-154. Residue Ser-178 is the Acyl-ester intermediate of the active site.

This sequence belongs to the amidase family. GatA subfamily. Heterotrimer of A, B and C subunits.

The enzyme catalyses L-glutamyl-tRNA(Gln) + L-glutamine + ATP + H2O = L-glutaminyl-tRNA(Gln) + L-glutamate + ADP + phosphate + H(+). In terms of biological role, allows the formation of correctly charged Gln-tRNA(Gln) through the transamidation of misacylated Glu-tRNA(Gln) in organisms which lack glutaminyl-tRNA synthetase. The reaction takes place in the presence of glutamine and ATP through an activated gamma-phospho-Glu-tRNA(Gln). This Cereibacter sphaeroides (strain ATCC 17029 / ATH 2.4.9) (Rhodobacter sphaeroides) protein is Glutamyl-tRNA(Gln) amidotransferase subunit A.